The sequence spans 387 residues: Na(+)/H(+)-K(+) antiporter GerN (387 aa).

11 consecutive transmembrane segments (helical) span residues 29-49 (PSVL…LGWI), 54-74 (LLTQ…GLET), 87-107 (LAVA…SGLV), 114-134 (NAVF…VQTL), 149-169 (LGAA…AMSF), 175-195 (VNLT…ILIG), 219-239 (ALII…AGII), 263-283 (PIAY…NITF), 290-310 (IWFI…GCGF), 324-344 (IIGA…GTGL), and 347-367 (GLLA…TTMI).

The protein belongs to the monovalent cation:proton antiporter 2 (CPA2) transporter (TC 2.A.37) family.

The protein localises to the membrane. Na(+)/H(+) antiporter that extrudes sodium in exchange for external protons. Can also use potassium as a coupling ion, without completely replacing H(+). This Na(+)/H(+)-K(+) antiport is much more rapid than Na(+)/H(+) antiport. Can also extrude lithium. Important for the inosine-dependent germination of spores. The chain is Na(+)/H(+)-K(+) antiporter GerN (gerN) from Bacillus cereus.